The sequence spans 152 residues: UPF0266 membrane protein YobD (152 aa).

Helical transmembrane passes span 6 to 26 (LVLI…QFIM), 45 to 65 (VDSV…VTSH), and 67 to 87 (AQMT…IFWI).

The protein belongs to the UPF0266 family.

It localises to the cell inner membrane. The protein is UPF0266 membrane protein YobD of Salmonella choleraesuis (strain SC-B67).